A 290-amino-acid chain; its full sequence is Endo-1,4-beta-xylanase B (290 aa).

The first 19 residues, methionine 1–alanine 19, serve as a signal peptide directing secretion. A glycan (N-linked (GlcNAc...) asparagine) is linked at asparagine 26. Residues glutamine 34–asparagine 222 form the GH11 domain. The active-site Nucleophile is glutamate 118. The active-site Proton donor is glutamate 209. The segment at proline 223–serine 248 is disordered. Residues threonine 234–serine 248 show a composition bias toward low complexity. Residues threonine 255 to leucine 290 form the CBM1 domain.

The protein belongs to the glycosyl hydrolase 11 (cellulase G) family.

The protein resides in the secreted. The catalysed reaction is Endohydrolysis of (1-&gt;4)-beta-D-xylosidic linkages in xylans.. It functions in the pathway glycan degradation; xylan degradation. In terms of biological role, endo-1,4-beta-xylanase involved in the hydrolysis of xylan, a major structural heterogeneous polysaccharide found in plant biomass representing the second most abundant polysaccharide in the biosphere, after cellulose. This chain is Endo-1,4-beta-xylanase B (xynB), found in Phanerodontia chrysosporium (White-rot fungus).